Reading from the N-terminus, the 382-residue chain is Glutamyl-tRNA reductase (382 aa).

Residues 38-41 (TCNR), Ser85, 90-92 (ENQ), and Gln96 each bind substrate. The active-site Nucleophile is Cys39. NADP(+) is bound at residue 164-169 (GAGEMG).

This sequence belongs to the glutamyl-tRNA reductase family. Homodimer.

It catalyses the reaction (S)-4-amino-5-oxopentanoate + tRNA(Glu) + NADP(+) = L-glutamyl-tRNA(Glu) + NADPH + H(+). The protein operates within porphyrin-containing compound metabolism; protoporphyrin-IX biosynthesis; 5-aminolevulinate from L-glutamyl-tRNA(Glu): step 1/2. Its function is as follows. Catalyzes the NADPH-dependent reduction of glutamyl-tRNA(Glu) to glutamate 1-semialdehyde (GSA). This is Glutamyl-tRNA reductase from Methanococcus maripaludis (strain C6 / ATCC BAA-1332).